The sequence spans 654 residues: Probable Xaa-Pro aminopeptidase P (654 aa).

The Mn(2+) site is built by D451, D462, E560, and E574.

Belongs to the peptidase M24B family. It depends on Mn(2+) as a cofactor.

The catalysed reaction is Release of any N-terminal amino acid, including proline, that is linked to proline, even from a dipeptide or tripeptide.. Its function is as follows. Catalyzes the removal of a penultimate prolyl residue from the N-termini of peptides. The chain is Probable Xaa-Pro aminopeptidase P (ampp) from Botryotinia fuckeliana (strain B05.10) (Noble rot fungus).